The primary structure comprises 311 residues: Methionyl-tRNA formyltransferase (311 aa).

110–113 provides a ligand contact to (6S)-5,6,7,8-tetrahydrofolate; that stretch reads SLLP.

This sequence belongs to the Fmt family.

It carries out the reaction L-methionyl-tRNA(fMet) + (6R)-10-formyltetrahydrofolate = N-formyl-L-methionyl-tRNA(fMet) + (6S)-5,6,7,8-tetrahydrofolate + H(+). In terms of biological role, attaches a formyl group to the free amino group of methionyl-tRNA(fMet). The formyl group appears to play a dual role in the initiator identity of N-formylmethionyl-tRNA by promoting its recognition by IF2 and preventing the misappropriation of this tRNA by the elongation apparatus. This is Methionyl-tRNA formyltransferase from Streptococcus uberis (strain ATCC BAA-854 / 0140J).